Reading from the N-terminus, the 150-residue chain is MAKVDKVENKDAVVEKKVDKKSKKSSYSKKKKIKKNILNGIAYVQSTFNNTIISIADTNGNVISWASAGQKGFKGSRKSTPYAAQIAADSAASKALEYGMKTLSVEVKGPGSGRETALRALQARGFKILSIKDTTPMPHNGVRPPKKRRV.

Belongs to the universal ribosomal protein uS11 family. Part of the 30S ribosomal subunit. Interacts with proteins S7 and S18. Binds to IF-3.

In terms of biological role, located on the platform of the 30S subunit, it bridges several disparate RNA helices of the 16S rRNA. Forms part of the Shine-Dalgarno cleft in the 70S ribosome. The polypeptide is Small ribosomal subunit protein uS11 (Pelagibacter ubique (strain HTCC1062)).